The following is a 255-amino-acid chain: MKLIPAIDLMNGKCVRLFKGDFNKRKDFSRKPYEQAKYWEEQGAKCIHIVDLDAAKSGYPSNDQSIKKIAKEVNIPIQIGGGIRSLERIEQLFSYGVDKVIMGTSAIENKELVKNLSTKFPRRIIIGIDAKDGKVSTRGWIEQSDVLATDLVKEFSKFEIASFIVTDINTDGTLEGTNEVFIKKILEITDIPVIASGGVGAISDLLSLTKFEHLGLCGVIVGKALYENKFKISEANNILSPERLQDIPINKDYFA.

The Proton acceptor role is filled by D8. Residue D129 is the Proton donor of the active site.

It belongs to the HisA/HisF family.

The protein resides in the cytoplasm. The catalysed reaction is 1-(5-phospho-beta-D-ribosyl)-5-[(5-phospho-beta-D-ribosylamino)methylideneamino]imidazole-4-carboxamide = 5-[(5-phospho-1-deoxy-D-ribulos-1-ylimino)methylamino]-1-(5-phospho-beta-D-ribosyl)imidazole-4-carboxamide. It participates in amino-acid biosynthesis; L-histidine biosynthesis; L-histidine from 5-phospho-alpha-D-ribose 1-diphosphate: step 4/9. The protein is 1-(5-phosphoribosyl)-5-[(5-phosphoribosylamino)methylideneamino] imidazole-4-carboxamide isomerase of Prochlorococcus marinus (strain MIT 9515).